The sequence spans 260 residues: Ribonuclease 3 (260 aa).

The disordered stretch occupies residues 1–24 (MAQSSKYQRKPRSGERKRSQRRLE). Over residues 12–24 (RSGERKRSQRRLE) the composition is skewed to basic and acidic residues. An RNase III domain is found at 33–162 (FDDLLVRTGL…FIGALYMDQG (130 aa)). Residue glutamate 75 coordinates Mg(2+). Aspartate 79 is a catalytic residue. Mg(2+) contacts are provided by aspartate 148 and glutamate 151. Residue glutamate 151 is part of the active site. Positions 188-257 (DFKSQLQEFV…AKQALLALNQ (70 aa)) constitute a DRBM domain.

This sequence belongs to the ribonuclease III family. In terms of assembly, homodimer. The cofactor is Mg(2+).

It localises to the cytoplasm. It carries out the reaction Endonucleolytic cleavage to 5'-phosphomonoester.. Functionally, digests double-stranded RNA. Involved in the processing of primary rRNA transcript to yield the immediate precursors to the large and small rRNAs (23S and 16S). Processes some mRNAs, and tRNAs when they are encoded in the rRNA operon. Processes pre-crRNA and tracrRNA of type II CRISPR loci if present in the organism. This chain is Ribonuclease 3, found in Shouchella clausii (strain KSM-K16) (Alkalihalobacillus clausii).